We begin with the raw amino-acid sequence, 408 residues long: MVQVNGNYLKLKAGYLFPEIGRRVKAFSAANPDAALIRLGIGDVTEPLPQACRDAMKTAIDAMGTAEGFHGYGPEQGYGWLREAIATHDFKARGCDISAEEIFVSDGSKCDSSNILDILGEGNRVAVTDPVYPVYVDSNVMAGRTGDAGDEGRYAGLTYLPISADNGFAAQIPSDPVDLIYLCFPNNPTGAVATKEQLKAWVDYARANDALILFDAAYEAFIQDPSLPHSIFEIEGARDCAIEFRSFSKNAGFTGTRCAFTVVPKGLKGKAANGEAVELWSLWNRRQSTKFNGVSYIIQRGAEAVYSEAGQAEVKGLVSFYMENAAIIRRELSAAGLTIYGGEHAPYVWIKTPDGMDSWGFFDHLLNKANVVGTPGSGFGAAGEGYFRLSAFNSRANVDEAMARIKAL.

Residues Y15 and G42 each contribute to the substrate site. Residues Y72, 108–109 (SK), Y132, N187, Y218, and 246–248 (SFS) contribute to the pyridoxal 5'-phosphate site. Residues K109, Y132, and N187 each contribute to the substrate site. Position 249 is an N6-(pyridoxal phosphate)lysine (K249). Positions 257 and 292 each coordinate pyridoxal 5'-phosphate. Substrate-binding residues include N292 and R388.

Belongs to the class-I pyridoxal-phosphate-dependent aminotransferase family. LL-diaminopimelate aminotransferase subfamily. Homodimer. Pyridoxal 5'-phosphate serves as cofactor.

It catalyses the reaction (2S,6S)-2,6-diaminopimelate + 2-oxoglutarate = (S)-2,3,4,5-tetrahydrodipicolinate + L-glutamate + H2O + H(+). It functions in the pathway amino-acid biosynthesis; L-lysine biosynthesis via DAP pathway; LL-2,6-diaminopimelate from (S)-tetrahydrodipicolinate (aminotransferase route): step 1/1. Its function is as follows. Involved in the synthesis of meso-diaminopimelate (m-DAP or DL-DAP), required for both lysine and peptidoglycan biosynthesis. Catalyzes the direct conversion of tetrahydrodipicolinate to LL-diaminopimelate. This Synechococcus sp. (strain WH7803) protein is LL-diaminopimelate aminotransferase.